Reading from the N-terminus, the 556-residue chain is Oxygen-dependent choline dehydrogenase (556 aa).

6–35 (DYIIIGAGSAGNVLAARLTEDPGVSVLLLE) contributes to the FAD binding site. H475 functions as the Proton acceptor in the catalytic mechanism.

This sequence belongs to the GMC oxidoreductase family. It depends on FAD as a cofactor.

The catalysed reaction is choline + A = betaine aldehyde + AH2. The enzyme catalyses betaine aldehyde + NAD(+) + H2O = glycine betaine + NADH + 2 H(+). The protein operates within amine and polyamine biosynthesis; betaine biosynthesis via choline pathway; betaine aldehyde from choline (cytochrome c reductase route): step 1/1. Functionally, involved in the biosynthesis of the osmoprotectant glycine betaine. Catalyzes the oxidation of choline to betaine aldehyde and betaine aldehyde to glycine betaine at the same rate. This Xanthomonas campestris pv. campestris (strain 8004) protein is Oxygen-dependent choline dehydrogenase.